The following is a 392-amino-acid chain: CCA-adding enzyme (392 aa).

2 residues coordinate ATP: Ser45 and Lys48. Ser45 and Lys48 together coordinate CTP. The Mg(2+) site is built by Asp55, Asp57, and Glu106. ATP contacts are provided by His129, Lys148, and Tyr157. His129, Lys148, and Tyr157 together coordinate CTP.

It belongs to the tRNA nucleotidyltransferase/poly(A) polymerase family. Archaeal CCA-adding enzyme subfamily. Homodimer. It depends on Mg(2+) as a cofactor.

It carries out the reaction a tRNA precursor + 2 CTP + ATP = a tRNA with a 3' CCA end + 3 diphosphate. The enzyme catalyses a tRNA with a 3' CCA end + 2 CTP + ATP = a tRNA with a 3' CCACCA end + 3 diphosphate. Catalyzes the addition and repair of the essential 3'-terminal CCA sequence in tRNAs without using a nucleic acid template. Adds these three nucleotides in the order of C, C, and A to the tRNA nucleotide-73, using CTP and ATP as substrates and producing inorganic pyrophosphate. tRNA 3'-terminal CCA addition is required both for tRNA processing and repair. Also involved in tRNA surveillance by mediating tandem CCA addition to generate a CCACCA at the 3' terminus of unstable tRNAs. While stable tRNAs receive only 3'-terminal CCA, unstable tRNAs are marked with CCACCA and rapidly degraded. This is CCA-adding enzyme from Nanoarchaeum equitans (strain Kin4-M).